A 329-amino-acid chain; its full sequence is Transmembrane protein I329L (329 aa).

An N-terminal signal peptide occupies residues 1-31 (MLRVFIFFVFLGSGLAGRIKPQITCKYFISE). N-linked (GlcNAc...) asparagine; by host glycans are attached at residues asparagine 32, asparagine 39, asparagine 44, asparagine 76, asparagine 82, and asparagine 101. Residues 32–239 (NNTWYKYNVT…NTERYKNCYP (208 aa)) are Extracellular-facing. One copy of the LRR repeat lies at 112-133 (ELKFLDLRYNNLQFIDYNILRK). N-linked (GlcNAc...) asparagine; by host glycans are attached at residues asparagine 185 and asparagine 219. A disulfide bridge connects residues cysteine 195 and cysteine 237. A helical transmembrane segment spans residues 240-260 (FVLVSILCSCISFLFLIICLL). At 261–329 (RSICKKYSCT…EKKASCSRRK (69 aa)) the chain is on the cytoplasmic side.

The protein belongs to the asfivirus I329L family. Highly glycosylated.

The protein localises to the host endoplasmic reticulum membrane. The protein resides in the host Golgi apparatus membrane. Its function is as follows. Viral TLR3 homolog that probably prevents TLR3 dimerization and subsequent induction of IFN. Inhibits dsRNA-stimulated activation of NF-kB and IRF3. In Ornithodoros (relapsing fever ticks), this protein is Transmembrane protein I329L.